A 100-amino-acid chain; its full sequence is Phosphoribosyl-ATP pyrophosphatase (100 aa).

It belongs to the PRA-PH family.

Its subcellular location is the cytoplasm. It carries out the reaction 1-(5-phospho-beta-D-ribosyl)-ATP + H2O = 1-(5-phospho-beta-D-ribosyl)-5'-AMP + diphosphate + H(+). It participates in amino-acid biosynthesis; L-histidine biosynthesis; L-histidine from 5-phospho-alpha-D-ribose 1-diphosphate: step 2/9. This is Phosphoribosyl-ATP pyrophosphatase from Haloquadratum walsbyi (strain DSM 16790 / HBSQ001).